A 481-amino-acid chain; its full sequence is Leukocyte immunoglobulin-like receptor subfamily A member 6 (481 aa).

The signal sequence occupies residues 1–23 (MTPALTALLCLGLSLGPRTRVQA). The Extracellular portion of the chain corresponds to 24–447 (GPFPKPTLWA…SHAKDYTVEN (424 aa)). Cys49 and Cys98 are disulfide-bonded. A compositionally biased stretch (basic and acidic residues) spans 59–70 (QLDKEGSPEPLD). The disordered stretch occupies residues 59 to 78 (QLDKEGSPEPLDRNNPLEPK). N-linked (GlcNAc...) asparagine glycosylation occurs at Asn139. 2 cysteine pairs are disulfide-bonded: Cys144/Cys196 and Cys245/Cys296. Ig-like C2-type domains are found at residues 225-314 (PSLL…DPLN) and 323-408 (DTVS…HLLS). N-linked (GlcNAc...) asparagine glycans are attached at residues Asn301 and Asn340. A disulfide bridge connects residues Cys345 and Cys396. The segment at 419 to 439 (SGHSGGSSLPPTGPPSTPASH) is disordered. The chain crosses the membrane as a helical span at residues 448–468 (LIRMGMAGLVLVFLGILLFEA). At 469–481 (QHSQRNPQDAAGR) the chain is on the cytoplasmic side.

Its subcellular location is the membrane. May act as receptor for class I MHC antigens. The chain is Leukocyte immunoglobulin-like receptor subfamily A member 6 (LILRA6) from Homo sapiens (Human).